A 134-amino-acid chain; its full sequence is Small ribosomal subunit protein uS12 (134 aa).

A disordered region spans residues 1–30 (MPTINQLVKHGREKVKEKSKSPALQGHPQK). Asp89 carries the post-translational modification 3-methylthioaspartic acid. The segment at 106 to 134 (GVENRRQSRSKYGAKRPKAGAAAGAKGKK) is disordered. Residues 112–123 (QSRSKYGAKRPK) are compositionally biased toward basic residues. Residues 124-134 (AGAAAGAKGKK) are compositionally biased toward low complexity.

Belongs to the universal ribosomal protein uS12 family. In terms of assembly, part of the 30S ribosomal subunit. Contacts proteins S8 and S17. May interact with IF1 in the 30S initiation complex.

Functionally, with S4 and S5 plays an important role in translational accuracy. Interacts with and stabilizes bases of the 16S rRNA that are involved in tRNA selection in the A site and with the mRNA backbone. Located at the interface of the 30S and 50S subunits, it traverses the body of the 30S subunit contacting proteins on the other side and probably holding the rRNA structure together. The combined cluster of proteins S8, S12 and S17 appears to hold together the shoulder and platform of the 30S subunit. This chain is Small ribosomal subunit protein uS12, found in Fervidobacterium nodosum (strain ATCC 35602 / DSM 5306 / Rt17-B1).